The sequence spans 351 residues: Glycerol-3-phosphate dehydrogenase 1-like protein (351 aa).

Position 12–17 (12–17 (GSGNWG)) interacts with NAD(+). Residue Lys122 coordinates substrate. NAD(+) is bound at residue Ala155. Lys206 functions as the Proton acceptor in the catalytic mechanism. NAD(+) contacts are provided by Arg271, Lys298, and Gln300. Substrate is bound at residue 271–272 (RN).

This sequence belongs to the NAD-dependent glycerol-3-phosphate dehydrogenase family. Interacts with SCN5A.

It is found in the cytoplasm. The catalysed reaction is sn-glycerol 3-phosphate + NAD(+) = dihydroxyacetone phosphate + NADH + H(+). Its function is as follows. Plays a role in regulating cardiac sodium current; decreased enzymatic activity with resulting increased levels of glycerol 3-phosphate activating the DPD1L-dependent SCN5A phosphorylation pathway, may ultimately lead to decreased sodium current; cardiac sodium current may also be reduced due to alterations of NAD(H) balance induced by DPD1L. In Mus musculus (Mouse), this protein is Glycerol-3-phosphate dehydrogenase 1-like protein (Gpd1l).